Reading from the N-terminus, the 311-residue chain is p-hydroxybenzoic acid efflux pump subunit AaeA (311 aa).

The chain crosses the membrane as a helical span at residues Ile-11 to Phe-31.

Belongs to the membrane fusion protein (MFP) (TC 8.A.1) family.

Its subcellular location is the cell inner membrane. In terms of biological role, forms an efflux pump with AaeB. The polypeptide is p-hydroxybenzoic acid efflux pump subunit AaeA (Yersinia enterocolitica serotype O:8 / biotype 1B (strain NCTC 13174 / 8081)).